Here is a 361-residue protein sequence, read N- to C-terminus: tRNA/tmRNA (uracil-C(5))-methyltransferase (361 aa).

5 residues coordinate S-adenosyl-L-methionine: Q183, Y211, N216, E232, and D294. Residue C319 is the Nucleophile of the active site. The active-site Proton acceptor is E353.

This sequence belongs to the class I-like SAM-binding methyltransferase superfamily. RNA M5U methyltransferase family. TrmA subfamily.

The catalysed reaction is uridine(54) in tRNA + S-adenosyl-L-methionine = 5-methyluridine(54) in tRNA + S-adenosyl-L-homocysteine + H(+). It catalyses the reaction uridine(341) in tmRNA + S-adenosyl-L-methionine = 5-methyluridine(341) in tmRNA + S-adenosyl-L-homocysteine + H(+). Its function is as follows. Dual-specificity methyltransferase that catalyzes the formation of 5-methyluridine at position 54 (m5U54) in all tRNAs, and that of position 341 (m5U341) in tmRNA (transfer-mRNA). The sequence is that of tRNA/tmRNA (uracil-C(5))-methyltransferase from Acinetobacter baumannii (strain AB307-0294).